We begin with the raw amino-acid sequence, 169 residues long: Probable chorismate pyruvate-lyase (169 aa).

Residues R71, I110, and E150 each coordinate substrate.

The protein belongs to the UbiC family.

The protein resides in the cytoplasm. It catalyses the reaction chorismate = 4-hydroxybenzoate + pyruvate. It participates in cofactor biosynthesis; ubiquinone biosynthesis. Functionally, removes the pyruvyl group from chorismate, with concomitant aromatization of the ring, to provide 4-hydroxybenzoate (4HB) for the ubiquinone pathway. This Acinetobacter baumannii (strain ATCC 17978 / DSM 105126 / CIP 53.77 / LMG 1025 / NCDC KC755 / 5377) protein is Probable chorismate pyruvate-lyase.